The sequence spans 486 residues: Glutamyl-tRNA(Gln) amidotransferase subunit A (486 aa).

Active-site charge relay system residues include lysine 74 and serine 149. The active-site Acyl-ester intermediate is serine 173.

It belongs to the amidase family. GatA subfamily. In terms of assembly, heterotrimer of A, B and C subunits.

It carries out the reaction L-glutamyl-tRNA(Gln) + L-glutamine + ATP + H2O = L-glutaminyl-tRNA(Gln) + L-glutamate + ADP + phosphate + H(+). In terms of biological role, allows the formation of correctly charged Gln-tRNA(Gln) through the transamidation of misacylated Glu-tRNA(Gln) in organisms which lack glutaminyl-tRNA synthetase. The reaction takes place in the presence of glutamine and ATP through an activated gamma-phospho-Glu-tRNA(Gln). The sequence is that of Glutamyl-tRNA(Gln) amidotransferase subunit A from Prochlorococcus marinus (strain NATL2A).